We begin with the raw amino-acid sequence, 333 residues long: 5-formaminoimidazole-4-carboxamide-1-(beta)-D-ribofuranosyl 5'-monophosphate synthetase (333 aa).

Residues His20 and Ser85 each coordinate 5-amino-1-(5-phospho-beta-D-ribosyl)imidazole-4-carboxamide. The 208-residue stretch at Arg106–Glu313 folds into the ATP-grasp domain. Residues Pro136–Tyr187 and Glu209 each bind ATP. Residue Asn229 coordinates 5-amino-1-(5-phospho-beta-D-ribosyl)imidazole-4-carboxamide. 2 residues coordinate Mg(2+): Glu268 and Glu281.

It belongs to the phosphohexose mutase family. Requires Mg(2+) as cofactor. Mn(2+) serves as cofactor.

It catalyses the reaction 5-amino-1-(5-phospho-beta-D-ribosyl)imidazole-4-carboxamide + formate + ATP = 5-formamido-1-(5-phospho-D-ribosyl)imidazole-4-carboxamide + ADP + phosphate. The protein operates within purine metabolism; IMP biosynthesis via de novo pathway; 5-formamido-1-(5-phospho-D-ribosyl)imidazole-4-carboxamide from 5-amino-1-(5-phospho-D-ribosyl)imidazole-4-carboxamide (formate route): step 1/1. Catalyzes the ATP- and formate-dependent formylation of 5-aminoimidazole-4-carboxamide-1-beta-d-ribofuranosyl 5'-monophosphate (AICAR) to 5-formaminoimidazole-4-carboxamide-1-beta-d-ribofuranosyl 5'-monophosphate (FAICAR) in the absence of folates. This is 5-formaminoimidazole-4-carboxamide-1-(beta)-D-ribofuranosyl 5'-monophosphate synthetase from Pyrobaculum islandicum (strain DSM 4184 / JCM 9189 / GEO3).